The sequence spans 626 residues: Probable serine/threonine-protein kinase CCRP1 (626 aa).

The 256-residue stretch at Tyr36–Leu291 folds into the Protein kinase domain. Residues Leu42 to Cys50 and Lys65 contribute to the ATP site. A Phosphoserine modification is found at Ser71. Asp159 (proton acceptor) is an active-site residue. The tract at residues Asn399 to Ser433 is disordered. Over residues Phe400 to Gln427 the composition is skewed to polar residues. 2 POLO box domains span residues Trp471–Gly554 and Tyr574–Pro626.

It belongs to the protein kinase superfamily. Ser/Thr protein kinase family. CDC5/Polo subfamily. In terms of tissue distribution, embryo.

It carries out the reaction L-seryl-[protein] + ATP = O-phospho-L-seryl-[protein] + ADP + H(+). It catalyses the reaction L-threonyl-[protein] + ATP = O-phospho-L-threonyl-[protein] + ADP + H(+). In terms of biological role, may play a role in the division of some cell types. The protein is Probable serine/threonine-protein kinase CCRP1 (CCRP1) of Zea mays (Maize).